Here is a 761-residue protein sequence, read N- to C-terminus: Neurotrypsin (761 aa).

The signal sequence occupies residues 1–21 (MALARCVLAVILGALSVVARA). A disordered region spans residues 25–87 (SRSPLHRPHP…PPTIPRRCGA (63 aa)). Over residues 38–48 (RSQHAHYLPSS) the composition is skewed to low complexity. A Kringle domain is found at 85-157 (CGAGESWGNA…GKVDWGYCDC (73 aa)). 17 disulfides stabilise this stretch: cysteine 85/cysteine 157, cysteine 101/cysteine 141, cysteine 130/cysteine 155, cysteine 191/cysteine 255, cysteine 204/cysteine 265, cysteine 235/cysteine 245, cysteine 298/cysteine 361, cysteine 311/cysteine 371, cysteine 341/cysteine 351, cysteine 411/cysteine 475, cysteine 424/cysteine 485, cysteine 455/cysteine 465, cysteine 505/cysteine 636, cysteine 547/cysteine 563, cysteine 651/cysteine 717, cysteine 680/cysteine 694, and cysteine 707/cysteine 736. Asparagine 93 is a glycosylation site (N-linked (GlcNAc...) asparagine). SRCR domains lie at 166–267 (IRLV…SCVP), 273–373 (IRLA…TCYP), and 386–487 (IRLV…ICDY). The tract at residues 505 to 516 (CGLRLLHRRQKR) is zymogen activation region. One can recognise a Peptidase S1 domain in the interval 517 to 760 (IIGGNNSLRG…FVPWIKSVTS (244 aa)). Asparagine 521 carries N-linked (GlcNAc...) asparagine glycosylation. The Charge relay system role is filled by histidine 562. Asparagine 569 carries N-linked (GlcNAc...) asparagine glycosylation. Aspartate 612 (charge relay system) is an active-site residue. Serine 711 serves as the catalytic Charge relay system.

The protein belongs to the peptidase S1 family. In terms of tissue distribution, most abundant in cerebral cortex, hippocampus and amygdala.

It localises to the secreted. Plays a role in neuronal plasticity and the proteolytic action may subserve structural reorganizations associated with learning and memory operations. The chain is Neurotrypsin (Prss12) from Mus musculus (Mouse).